Reading from the N-terminus, the 239-residue chain is Ribonuclease HII (239 aa).

The RNase H type-2 domain occupies 30 to 221 (GPVAGVDEVG…VRRVANGSGG (192 aa)). Aspartate 36, glutamate 37, and aspartate 130 together coordinate a divalent metal cation.

It belongs to the RNase HII family. Requires Mn(2+) as cofactor. The cofactor is Mg(2+).

Its subcellular location is the cytoplasm. The catalysed reaction is Endonucleolytic cleavage to 5'-phosphomonoester.. Its function is as follows. Endonuclease that specifically degrades the RNA of RNA-DNA hybrids. This chain is Ribonuclease HII, found in Mycolicibacterium paratuberculosis (strain ATCC BAA-968 / K-10) (Mycobacterium paratuberculosis).